Reading from the N-terminus, the 538-residue chain is Chaperonin GroEL (538 aa).

ATP contacts are provided by residues 29–32 (TIGP), 86–90 (DGTTT), G413, 476–478 (NAA), and D492.

Belongs to the chaperonin (HSP60) family. Forms a cylinder of 14 subunits composed of two heptameric rings stacked back-to-back. Interacts with the co-chaperonin GroES.

It localises to the cytoplasm. It carries out the reaction ATP + H2O + a folded polypeptide = ADP + phosphate + an unfolded polypeptide.. Functionally, together with its co-chaperonin GroES, plays an essential role in assisting protein folding. The GroEL-GroES system forms a nano-cage that allows encapsulation of the non-native substrate proteins and provides a physical environment optimized to promote and accelerate protein folding. In Staphylococcus aureus (strain USA300), this protein is Chaperonin GroEL.